Reading from the N-terminus, the 413-residue chain is Ferredoxin--NADP reductase (413 aa).

Met1 is subject to N-acetylmethionine. The CpcD-like domain maps to Asn18–Leu76. Residues Lys74 to Lys120 are disordered. A compositionally biased stretch (polar residues) spans Pro107–Thr116. Positions Lys133–Leu256 constitute an FAD-binding FR-type domain. FAD is bound by residues Arg192–Ser195, Cys213–Arg215, Tyr219, Val230–Ser232, and Thr271. Ser195 and Arg215 together coordinate NADP(+). NADP(+) is bound by residues Thr271, Ile303–Pro304, Ser333–Arg334, Arg343–Gln347, Gly372–Leu373, and Glu411.

This sequence belongs to the ferredoxin--NADP reductase type 1 family. In terms of assembly, purifies with both the classic phycobilisome (PBS) supercomplex (CpcG-PBS) and a photosystem I-associated PBS called CpcL-PBS; it accumulates to a higher level in CpcL-PBS. In both PBS it can be cross-linked to both phycocyanin subunits. Requires FAD as cofactor. Acetylated at the N-terminus; 6% of protein in CpcG-PBS and 12% of protein in CpcL-PBS is acetylated.

It is found in the cellular thylakoid membrane. The enzyme catalyses 2 reduced [2Fe-2S]-[ferredoxin] + NADP(+) + H(+) = 2 oxidized [2Fe-2S]-[ferredoxin] + NADPH. The polypeptide is Ferredoxin--NADP reductase (Synechocystis sp. (strain ATCC 27184 / PCC 6803 / Kazusa)).